Here is a 968-residue protein sequence, read N- to C-terminus: Glycine dehydrogenase (decarboxylating) (968 aa).

The residue at position 713 (Lys713) is an N6-(pyridoxal phosphate)lysine.

The protein belongs to the GcvP family. The glycine cleavage system is composed of four proteins: P, T, L and H. Pyridoxal 5'-phosphate is required as a cofactor.

The enzyme catalyses N(6)-[(R)-lipoyl]-L-lysyl-[glycine-cleavage complex H protein] + glycine + H(+) = N(6)-[(R)-S(8)-aminomethyldihydrolipoyl]-L-lysyl-[glycine-cleavage complex H protein] + CO2. The glycine cleavage system catalyzes the degradation of glycine. The P protein binds the alpha-amino group of glycine through its pyridoxal phosphate cofactor; CO(2) is released and the remaining methylamine moiety is then transferred to the lipoamide cofactor of the H protein. The sequence is that of Glycine dehydrogenase (decarboxylating) from Variovorax paradoxus (strain S110).